Consider the following 380-residue polypeptide: E3 ubiquitin-protein ligase PHF7 (380 aa).

A disordered region spans residues 1 to 23; it reads MRTIKEKKEHPRLRKTARTKKVT. The segment covering 10–23 has biased composition (basic residues); that stretch reads HPRLRKTARTKKVT. A C2HC pre-PHD-type zinc finger spans residues 30-68; the sequence is GPVCLLCFQEPGDPEKLGEFLQKDNLCVHYFCLILSSKL. Cysteine 33, cysteine 36, histidine 58, and cysteine 61 together coordinate Zn(2+). Residues 67–92 form a required for interaction and ubiquitination of the nucleosome core particle region; that stretch reads KLPQKGQPNRGLHGFMPEDIKKEAAR. The PHD-type zinc-finger motif lies at 96–145; the sequence is KVCFVCKRKGAAIRCQKDQCVQNFHLPCGQERGCLSQFFGEYKSYCGKHR. Cysteine 98, cysteine 101, cysteine 110, cysteine 115, histidine 120, cysteine 123, cysteine 141, histidine 144, cysteine 159, cysteine 162, cysteine 178, cysteine 179, histidine 185, cysteine 188, cysteine 203, cysteine 206, cysteine 247, cysteine 252, cysteine 272, cysteine 275, histidine 281, cysteine 284, cysteine 296, and cysteine 299 together coordinate Zn(2+). The interval 150-306 is required for interaction with ubiquitinated UBE2D2; the sequence is IHQRSFGESC…NECLPASTED (157 aa). An RING-type; degenerate zinc finger spans residues 159 to 207; the sequence is CVLCCEDLSRASVENIRSPCCSQAIYHRKCIQKYAHTSAKHFFKCPQCN. The tract at residues 243 to 300 is required for association with and ubiquitination of H3; the sequence is RYQHCDAPICLYEQGRDSFEDEGRWRLILCATCGSHGTHRDCSSLRPNSKKWECNECL. The span at 352–367 shows a compositional bias: low complexity; that stretch reads EKPESSSGSSCQSWRS. The tract at residues 352 to 380 is disordered; the sequence is EKPESSSGSSCQSWRSKGIKVTKDCKKSK.

Interacts with MEF2C; the interaction promotes MEF2C binding to its transcription targets. Interacts with GATA4; the interaction promotes GATA4 binding to its transcription targets. Interacts with UBE2D2; the interaction inhibits cleavage of PHF7 and promotes association of the complex with the nucleosome core particle.

The protein localises to the nucleus. The enzyme catalyses S-ubiquitinyl-[E2 ubiquitin-conjugating enzyme]-L-cysteine + [acceptor protein]-L-lysine = [E2 ubiquitin-conjugating enzyme]-L-cysteine + N(6)-ubiquitinyl-[acceptor protein]-L-lysine.. The protein operates within protein modification; protein ubiquitination. E3 ubiquitin-protein ligase which ubiquitinates histone H3 at 'Lys-14'. Required for male fertility, via inhibition of SPOP-mediated BRDT degradation when in the presence of acetylated histone H4 in early condensing spermatids. Stabilization of BRDT allows it to facilitate histone removal in early condensing spermatids and promote the progression of histone-to-protamine exchange. Promotes the expression of steroidogenesis proteins in the testes, and as a result plays a role in maintaining testosterone levels and repressing osteoclastogenesis. Promotes transcription of cardiac enhancer genes by facilitating binding of cardiac transcription factors such as MEF2C and GATA4 to target gene promoters. Ubiquitinates histone H4. Ubiquitinates histone H2A and H3 as part of the nucleosome core particle. The sequence is that of E3 ubiquitin-protein ligase PHF7 from Rattus norvegicus (Rat).